We begin with the raw amino-acid sequence, 288 residues long: UDP-3-O-acyl-N-acetylglucosamine deacetylase (288 aa).

Zn(2+) is bound by residues His79, His236, and Asp240. His263 (proton donor) is an active-site residue.

Belongs to the LpxC family. Requires Zn(2+) as cofactor.

It catalyses the reaction a UDP-3-O-[(3R)-3-hydroxyacyl]-N-acetyl-alpha-D-glucosamine + H2O = a UDP-3-O-[(3R)-3-hydroxyacyl]-alpha-D-glucosamine + acetate. It functions in the pathway glycolipid biosynthesis; lipid IV(A) biosynthesis; lipid IV(A) from (3R)-3-hydroxytetradecanoyl-[acyl-carrier-protein] and UDP-N-acetyl-alpha-D-glucosamine: step 2/6. Catalyzes the hydrolysis of UDP-3-O-myristoyl-N-acetylglucosamine to form UDP-3-O-myristoylglucosamine and acetate, the committed step in lipid A biosynthesis. The polypeptide is UDP-3-O-acyl-N-acetylglucosamine deacetylase (Rickettsia bellii (strain OSU 85-389)).